The sequence spans 249 residues: 5'-nucleotidase SurE (249 aa).

Asp8, Asp9, Ser39, and Asn91 together coordinate a divalent metal cation.

The protein belongs to the SurE nucleotidase family. It depends on a divalent metal cation as a cofactor.

The protein resides in the cytoplasm. It catalyses the reaction a ribonucleoside 5'-phosphate + H2O = a ribonucleoside + phosphate. Nucleotidase that shows phosphatase activity on nucleoside 5'-monophosphates. The sequence is that of 5'-nucleotidase SurE from Pseudomonas savastanoi pv. phaseolicola (strain 1448A / Race 6) (Pseudomonas syringae pv. phaseolicola (strain 1448A / Race 6)).